The sequence spans 416 residues: CinA-like protein (416 aa).

Belongs to the CinA family.

The protein is CinA-like protein of Solibacter usitatus (strain Ellin6076).